Consider the following 1021-residue polypeptide: Translation initiation factor IF-2 (1021 aa).

Residues 50 to 422 form a disordered region; that stretch reads AFPAEGGSAS…RMGAMVPRGN (373 aa). Over residues 57 to 71 the composition is skewed to gly residues; the sequence is SASGGRPGGRPGPGN. A compositionally biased stretch (pro residues) spans 75-95; it reads PAPPRPGLAPRPGPRPVPGRP. Residues 96–112 are compositionally biased toward low complexity; that stretch reads GPAARPGGPAAPSAPAA. Residues 113-129 show a composition bias toward pro residues; the sequence is PSAPAPGAPAASPPASQ. Low complexity-rich tracts occupy residues 130–159, 167–178, and 187–196; these read PRPIAASAAAPPPAATSIPPVSSPAAASGP, GGPAAPGRARPG, and SAPSAPSAGG. Over residues 198-208 the composition is skewed to pro residues; it reads RPGPRPGPRPS. The segment covering 219-233 has biased composition (low complexity); sequence SAGPRQSAGQSGSGP. 2 stretches are compositionally biased toward pro residues: residues 234-254 and 262-273; these read ASPPRPGAPRPGPRPGGPRPG and RPSPGSMPPRPG. Composition is skewed to gly residues over residues 275–291 and 306–389; these read RPGGSGGMPPRPGGSGG and GAPG…GGRG. Residues 390–401 are compositionally biased toward basic residues; sequence RPGRQRKSKRAK. The tr-type G domain maps to 514–686; the sequence is IRPPVVTVMG…IILTADASLD (173 aa). The G1 stretch occupies residues 523–530; it reads GHVDHGKT. Residue 523–530 coordinates GTP; sequence GHVDHGKT. The interval 548 to 552 is G2; the sequence is GITQH. Residues 573-576 form a G3 region; sequence DTPG. Residues 573–577 and 627–630 each bind GTP; these read DTPGH and NKVD. Residues 627 to 630 form a G4 region; that stretch reads NKVD. The G5 stretch occupies residues 663 to 665; sequence SAR.

It belongs to the TRAFAC class translation factor GTPase superfamily. Classic translation factor GTPase family. IF-2 subfamily.

The protein resides in the cytoplasm. Its function is as follows. One of the essential components for the initiation of protein synthesis. Protects formylmethionyl-tRNA from spontaneous hydrolysis and promotes its binding to the 30S ribosomal subunits. Also involved in the hydrolysis of GTP during the formation of the 70S ribosomal complex. The chain is Translation initiation factor IF-2 from Frankia alni (strain DSM 45986 / CECT 9034 / ACN14a).